Here is a 324-residue protein sequence, read N- to C-terminus: Methionyl-tRNA formyltransferase (324 aa).

114 to 117 provides a ligand contact to (6S)-5,6,7,8-tetrahydrofolate; that stretch reads SLLP.

It belongs to the Fmt family.

It carries out the reaction L-methionyl-tRNA(fMet) + (6R)-10-formyltetrahydrofolate = N-formyl-L-methionyl-tRNA(fMet) + (6S)-5,6,7,8-tetrahydrofolate + H(+). Attaches a formyl group to the free amino group of methionyl-tRNA(fMet). The formyl group appears to play a dual role in the initiator identity of N-formylmethionyl-tRNA by promoting its recognition by IF2 and preventing the misappropriation of this tRNA by the elongation apparatus. The chain is Methionyl-tRNA formyltransferase from Parabacteroides distasonis (strain ATCC 8503 / DSM 20701 / CIP 104284 / JCM 5825 / NCTC 11152).